We begin with the raw amino-acid sequence, 462 residues long: Cysteine--tRNA ligase (462 aa).

A Zn(2+)-binding site is contributed by Cys-30. Residues 32–42 carry the 'HIGH' region motif; sequence MTVYDYCHVGH. Zn(2+) is bound by residues Cys-214, His-239, and Glu-243. The 'KMSKS' region motif lies at 271–275; that stretch reads KMSKS. ATP is bound at residue Lys-274.

The protein belongs to the class-I aminoacyl-tRNA synthetase family. As to quaternary structure, monomer. Zn(2+) serves as cofactor.

It is found in the cytoplasm. The catalysed reaction is tRNA(Cys) + L-cysteine + ATP = L-cysteinyl-tRNA(Cys) + AMP + diphosphate. The polypeptide is Cysteine--tRNA ligase (Cupriavidus necator (strain ATCC 17699 / DSM 428 / KCTC 22496 / NCIMB 10442 / H16 / Stanier 337) (Ralstonia eutropha)).